Consider the following 1072-residue polypeptide: DNA-directed RNA polymerase subunit beta (1072 aa).

This sequence belongs to the RNA polymerase beta chain family. As to quaternary structure, in plastids the minimal PEP RNA polymerase catalytic core is composed of four subunits: alpha, beta, beta', and beta''. When a (nuclear-encoded) sigma factor is associated with the core the holoenzyme is formed, which can initiate transcription.

Its subcellular location is the plastid. It is found in the chloroplast. It carries out the reaction RNA(n) + a ribonucleoside 5'-triphosphate = RNA(n+1) + diphosphate. In terms of biological role, DNA-dependent RNA polymerase catalyzes the transcription of DNA into RNA using the four ribonucleoside triphosphates as substrates. The polypeptide is DNA-directed RNA polymerase subunit beta (Crucihimalaya wallichii (Rock-cress)).